We begin with the raw amino-acid sequence, 241 residues long: Probable septum site-determining protein MinC (241 aa).

It belongs to the MinC family. As to quaternary structure, interacts with MinD and FtsZ.

Its function is as follows. Cell division inhibitor that blocks the formation of polar Z ring septums. Rapidly oscillates between the poles of the cell to destabilize FtsZ filaments that have formed before they mature into polar Z rings. Prevents FtsZ polymerization. In Rhizobium rhizogenes (strain K84 / ATCC BAA-868) (Agrobacterium radiobacter), this protein is Probable septum site-determining protein MinC.